The following is a 402-amino-acid chain: Speedy protein E2B (402 aa).

Positions 1-89 (MDRTETRFRK…EEPEKELAPE (89 aa)) are disordered. The span at 16-39 (GKITTSRQPHPQNEQSPQRSTSGY) shows a compositional bias: polar residues. Residues 76 to 89 (DESEEEPEKELAPE) show a composition bias toward acidic residues.

The protein belongs to the Speedy/Ringo family.

The chain is Speedy protein E2B (SPDYE2B) from Homo sapiens (Human).